We begin with the raw amino-acid sequence, 384 residues long: Flap endonuclease 1 (384 aa).

Positions 1-108 are N-domain; sequence MGIHKLMDLL…GELARRQKAK (108 aa). Mg(2+) is bound at residue Asp34. Arg74 lines the DNA pocket. The Mg(2+) site is built by Asp90, Glu162, Glu164, Asp183, and Asp185. Positions 126 to 254 are I-domain; it reads EALKQEQRNL…VNAFKLITEH (129 aa). Glu162 serves as a coordination point for DNA. 2 residues coordinate DNA: Gly232 and Asp234. Residue Asp234 coordinates Mg(2+). Residues 340–384 are disordered; the sequence is AKEHKGSQTRLNDFFKVQPKDTSSTSKASKKPTNTKSANKKGGKK. The segment at 346–354 is interaction with PCNA; the sequence is SQTRLNDFF. Low complexity predominate over residues 359-376; sequence KDTSSTSKASKKPTNTKS.

It belongs to the XPG/RAD2 endonuclease family. FEN1 subfamily. In terms of assembly, interacts with PCNA. Three molecules of FEN1 bind to one PCNA trimer with each molecule binding to one PCNA monomer. PCNA stimulates the nuclease activity without altering cleavage specificity. Requires Mg(2+) as cofactor. Phosphorylated. Phosphorylation upon DNA damage induces relocalization to the nuclear plasma.

It is found in the nucleus. Its subcellular location is the nucleolus. The protein resides in the nucleoplasm. It localises to the mitochondrion. Structure-specific nuclease with 5'-flap endonuclease and 5'-3' exonuclease activities involved in DNA replication and repair. During DNA replication, cleaves the 5'-overhanging flap structure that is generated by displacement synthesis when DNA polymerase encounters the 5'-end of a downstream Okazaki fragment. It enters the flap from the 5'-end and then tracks to cleave the flap base, leaving a nick for ligation. Also involved in the long patch base excision repair (LP-BER) pathway, by cleaving within the apurinic/apyrimidinic (AP) site-terminated flap. Acts as a genome stabilization factor that prevents flaps from equilibrating into structures that lead to duplications and deletions. Also possesses 5'-3' exonuclease activity on nicked or gapped double-stranded DNA, and exhibits RNase H activity. Also involved in replication and repair of rDNA and in repairing mitochondrial DNA. This Tetrahymena thermophila (strain SB210) protein is Flap endonuclease 1.